Reading from the N-terminus, the 117-residue chain is Small ribosomal subunit protein bS6 (117 aa).

It belongs to the bacterial ribosomal protein bS6 family.

Functionally, binds together with bS18 to 16S ribosomal RNA. This chain is Small ribosomal subunit protein bS6, found in Trichodesmium erythraeum (strain IMS101).